We begin with the raw amino-acid sequence, 390 residues long: uncharacterized protein (390 aa).

A run of 11 helical transmembrane segments spans residues 10–30 (LSFC…LPIL), 43–63 (FLIG…QIPF), 81–101 (FMFF…GLII), 134–154 (AIGV…PIIV), 162–182 (IFWI…FFVP), 213–233 (FYLG…MIPN), 246–266 (WKVY…FIFY), 272–292 (ILEN…IIFL), 298–318 (LLFL…LEVF), 341–361 (TSQF…YSFL), and 363–383 (FSQI…FSFF).

It belongs to the major facilitator superfamily.

It localises to the cell membrane. This is an uncharacterized protein from Buchnera aphidicola subsp. Acyrthosiphon pisum (strain APS) (Acyrthosiphon pisum symbiotic bacterium).